The sequence spans 566 residues: CTP synthase (566 aa).

The tract at residues 1–282 (MSIKRAQLGG…DAYIIDQLGL (282 aa)) is amidoligase domain. Ser-23 contributes to the CTP binding site. Ser-23 lines the UTP pocket. ATP-binding positions include 24-29 (SLGKGL) and Asp-81. Residues Asp-81 and Glu-156 each contribute to the Mg(2+) site. Residues 163–165 (DIE), 203–208 (KTKPTQ), and Lys-239 each bind CTP. UTP is bound by residues 203–208 (KTKPTQ) and Lys-239. The Glutamine amidotransferase type-1 domain maps to 308 to 556 (TIGLVGKYID…IGAALDRQKA (249 aa)). Gly-371 is a binding site for L-glutamine. Cys-398 serves as the catalytic Nucleophile; for glutamine hydrolysis. L-glutamine-binding positions include 399–402 (LGLQ), Glu-422, and Arg-482. Catalysis depends on residues His-529 and Glu-531.

Belongs to the CTP synthase family. As to quaternary structure, homotetramer.

It carries out the reaction UTP + L-glutamine + ATP + H2O = CTP + L-glutamate + ADP + phosphate + 2 H(+). The catalysed reaction is L-glutamine + H2O = L-glutamate + NH4(+). It catalyses the reaction UTP + NH4(+) + ATP = CTP + ADP + phosphate + 2 H(+). It functions in the pathway pyrimidine metabolism; CTP biosynthesis via de novo pathway; CTP from UDP: step 2/2. Its activity is regulated as follows. Allosterically activated by GTP, when glutamine is the substrate; GTP has no effect on the reaction when ammonia is the substrate. The allosteric effector GTP functions by stabilizing the protein conformation that binds the tetrahedral intermediate(s) formed during glutamine hydrolysis. Inhibited by the product CTP, via allosteric rather than competitive inhibition. Functionally, catalyzes the ATP-dependent amination of UTP to CTP with either L-glutamine or ammonia as the source of nitrogen. Regulates intracellular CTP levels through interactions with the four ribonucleotide triphosphates. The chain is CTP synthase from Leifsonia xyli subsp. xyli (strain CTCB07).